The following is a 725-amino-acid chain: Homeobox-leucine zipper protein HDG3 (725 aa).

The interval 1 to 74 (MSQSNMVPVA…PRHKKKKYNR (74 aa)) is disordered. The span at 11-40 (NNGDNNNDNENNNNNNNNGGTDNTNAGNDS) shows a compositional bias: low complexity. Positions 46–64 (DSGNTSSGNHGEGLGNNQA) are enriched in polar residues. Over residues 65-74 (PRHKKKKYNR) the composition is skewed to basic residues. A DNA-binding region (homeobox) is located at residues 68–127 (KKKKYNRHTQLQISEMEAFFRECPHPDDKQRYDLSAQLGLDPVQIKFWFQNKRTQNKNQQ). The stretch at 117-201 (QNKRTQNKNQ…SVTAEKISRL (85 aa)) forms a coiled coil. In terms of domain architecture, START spans 243–475 (DANTKPIIME…LVRQCERISS (233 aa)).

The protein belongs to the HD-ZIP homeobox family. Class IV subfamily. In terms of assembly, interacts with AIL7/PLT7, ANT, BBM and AIL1. Expressed in siliques.

The protein resides in the nucleus. Its function is as follows. Probable transcription factor. Seems to promote cell differentiation. This is Homeobox-leucine zipper protein HDG3 from Arabidopsis thaliana (Mouse-ear cress).